A 178-amino-acid polypeptide reads, in one-letter code: Prion-like protein doppel (178 aa).

An N-terminal signal peptide occupies residues 1-25 (MRKHLGGCWLAIVCILLFSQLCSVK). Positions 27-50 (RGIKHRIKWNRKVLPSTSQVTEAR) are flexible tail. The tract at residues 51 to 154 (TAEIRPGAFI…KHCDFWLERG (104 aa)) is globular. 2 disulfides stabilise this stretch: cysteine 94–cysteine 147 and cysteine 108–cysteine 142. 2 N-linked (GlcNAc...) asparagine glycosylation sites follow: asparagine 98 and asparagine 110. Residues 124–141 (KQDNKLYQRVLWQLIREL) are cu(2+) binding. Residue glycine 154 is the site of GPI-anchor amidated glycine attachment. Positions 155 to 178 (AGLRVTLDQPMMLCLLVFIWFIVK) are cleaved as a propeptide — removed in mature form.

This sequence belongs to the prion family. In terms of processing, N-glycosylated. Post-translationally, O-glycosylated. As to expression, strongly expressed in testis. Detected at low levels in ovary, spleen, kidney and mammary gland.

It is found in the cell membrane. Its function is as follows. Required for normal acrosome reaction and for normal male fertility. Can bind Cu(2+). This Bos taurus (Bovine) protein is Prion-like protein doppel (PRND).